An 876-amino-acid polypeptide reads, in one-letter code: Exosome complex component 10 homolog (876 aa).

Positions Met1–Ile22 are disordered. The region spanning Thr279–Leu445 is the 3'-5' exonuclease domain. Residues Asp303, Glu305, Asp361, and Asp430 each contribute to the Mg(2+) site. Positions Asn489–Lys569 constitute an HRDC domain. Composition is skewed to basic and acidic residues over residues Glu690–Ala730, Val741–Glu752, and Lys834–His847. The disordered stretch occupies residues Glu690 to Lys876. Basic residues predominate over residues Gln848–Ala861.

This sequence belongs to the exosome component 10/RRP6 family. In terms of assembly, component of the RNA exosome complex. Interacts with crn-5. Mg(2+) is required as a cofactor. As to expression, ubiquitously expressed.

The protein resides in the nucleus. Its subcellular location is the nucleolus. The protein localises to the nucleoplasm. Its function is as follows. Catalytic component of the RNA exosome complex which has 3'-&gt;5' exoribonuclease activity and participates in a multitude of cellular RNA processing and degradation events. Involved in apoptotic DNA degradation. Involved in regulation of antisense ribosomal siRNA production. Involved in response to cold-warm shock. This is Exosome complex component 10 homolog from Caenorhabditis elegans.